Here is a 116-residue protein sequence, read N- to C-terminus: POU domain, class 4, transcription factor 1 (116 aa).

Residues 1–54 enclose the POU-specific domain; the sequence is VTQADVGSALANLKIPGVGSLSQSTICRFESLTLSHNNMIALKPILQAWLEEAE. The tract at residues 56–79 is disordered; that stretch reads AQREKMNKPELFNGGEKKRKRTSI. A DNA-binding region (homeobox) is located at residues 72–116; the sequence is KKRKRTSIAAPEKRSLEAYFAVQPRPSSEKIAAIAEKLDLKKNVV.

This sequence belongs to the POU transcription factor family. Class-4 subfamily.

It is found in the nucleus. It localises to the cytoplasm. Functionally, multifunctional transcription factor with different regions mediating its different effects. Acts by binding (via its C-terminal domain) to sequences related to the consensus octamer motif 5'-ATGCAAAT-3' in the regulatory regions of its target genes. Regulates the expression of specific genes involved in differentiation and survival within a subset of neuronal lineages. It has been shown that activation of some of these genes requires its N-terminal domain, maybe through a neuronal-specific cofactor. This chain is POU domain, class 4, transcription factor 1 (POU4F1), found in Gallus gallus (Chicken).